A 147-amino-acid chain; its full sequence is SsrA-binding protein (147 aa).

Belongs to the SmpB family.

It localises to the cytoplasm. In terms of biological role, required for rescue of stalled ribosomes mediated by trans-translation. Binds to transfer-messenger RNA (tmRNA), required for stable association of tmRNA with ribosomes. tmRNA and SmpB together mimic tRNA shape, replacing the anticodon stem-loop with SmpB. tmRNA is encoded by the ssrA gene; the 2 termini fold to resemble tRNA(Ala) and it encodes a 'tag peptide', a short internal open reading frame. During trans-translation Ala-aminoacylated tmRNA acts like a tRNA, entering the A-site of stalled ribosomes, displacing the stalled mRNA. The ribosome then switches to translate the ORF on the tmRNA; the nascent peptide is terminated with the 'tag peptide' encoded by the tmRNA and targeted for degradation. The ribosome is freed to recommence translation, which seems to be the essential function of trans-translation. The chain is SsrA-binding protein from Mycoplasmopsis fermentans (strain ATCC 19989 / NBRC 14854 / NCTC 10117 / PG18) (Mycoplasma fermentans).